The following is a 2555-amino-acid chain: Ubiquitin carboxyl-terminal hydrolase 9Y (2555 aa).

The segment at 1-66 (MTAITHGSPV…APPQHEDEEP (66 aa)) is disordered. Positions 13-45 (NDSQGQVLDGQSQHLFQQNQTSSPDSSNENSVA) are enriched in polar residues. Serine 589 carries the post-translational modification Phosphoserine. Threonine 591 bears the Phosphothreonine mark. Positions 972-997 (NMPSSPDSSSDSSTASPGNHRNHYND) are disordered. Residues 974–984 (PSSPDSSSDSS) are compositionally biased toward low complexity. The USP domain maps to 1559-1958 (VGLKNAGATC…NAYILFYEQM (400 aa)). Cysteine 1568 (nucleophile) is an active-site residue. 4 residues coordinate Zn(2+): cysteine 1729, histidine 1731, cysteine 1773, and cysteine 1776. Histidine 1881 serves as the catalytic Proton acceptor. The residue at position 2444 (serine 2444) is a Phosphoserine. Over residues 2476 to 2485 (PEEEPDDQDA) the composition is skewed to acidic residues. The interval 2476–2555 (PEEEPDDQDA…EVSSPQMKDQ (80 aa)) is disordered. 2 stretches are compositionally biased toward polar residues: residues 2504 to 2514 (PASQYQQNNHV) and 2528 to 2555 (NNPQ…MKDQ). Tyrosine 2541 bears the Phosphotyrosine mark. Phosphoserine is present on serine 2548.

This sequence belongs to the peptidase C19 family. As to expression, widely expressed in embryonic and adult tissues.

The enzyme catalyses Thiol-dependent hydrolysis of ester, thioester, amide, peptide and isopeptide bonds formed by the C-terminal Gly of ubiquitin (a 76-residue protein attached to proteins as an intracellular targeting signal).. The protein operates within protein modification; protein ubiquitination. Deubiquitinase that mediates deubiquitination of target proteins. May stabilize target proteins that are important for male germ cell development. The sequence is that of Ubiquitin carboxyl-terminal hydrolase 9Y from Homo sapiens (Human).